We begin with the raw amino-acid sequence, 370 residues long: Anthranilate phosphoribosyltransferase (370 aa).

5-phospho-alpha-D-ribose 1-diphosphate is bound by residues Gly-82, 85-86, Thr-90, 92-95, 110-118, and Ser-122; these read GD, NVST, and KHGNRAATS. Gly-82 is a binding site for anthranilate. Ser-94 serves as a coordination point for Mg(2+). Asn-113 provides a ligand contact to anthranilate. An anthranilate-binding site is contributed by Arg-168. Mg(2+)-binding residues include Asp-226 and Glu-227.

The protein belongs to the anthranilate phosphoribosyltransferase family. As to quaternary structure, homodimer. Mg(2+) is required as a cofactor.

It catalyses the reaction N-(5-phospho-beta-D-ribosyl)anthranilate + diphosphate = 5-phospho-alpha-D-ribose 1-diphosphate + anthranilate. It participates in amino-acid biosynthesis; L-tryptophan biosynthesis; L-tryptophan from chorismate: step 2/5. Catalyzes the transfer of the phosphoribosyl group of 5-phosphorylribose-1-pyrophosphate (PRPP) to anthranilate to yield N-(5'-phosphoribosyl)-anthranilate (PRA). In Methanosarcina acetivorans (strain ATCC 35395 / DSM 2834 / JCM 12185 / C2A), this protein is Anthranilate phosphoribosyltransferase.